Consider the following 283-residue polypeptide: Galactooligosaccharides transport system permease protein GanQ (283 aa).

6 consecutive transmembrane segments (helical) span residues 13–33, 82–102, 115–135, 137–157, 188–208, and 248–268; these read LLFS…PLLW, ISLF…YAFS, LFLL…FVLA, ILGM…GLIP, IFFQ…AMNG, and TTFA…FIML. Positions 76 to 268 constitute an ABC transmembrane type-1 domain; the sequence is YVNSMKISLF…IPVAVIFIML (193 aa).

This sequence belongs to the binding-protein-dependent transport system permease family. In terms of assembly, the complex is composed of two ATP-binding proteins (MsmX), two transmembrane proteins (GanP and GanQ) and a solute-binding protein (GanS).

The protein localises to the cell membrane. In terms of biological role, involved in galactan degradation. Part of the ABC transporter complex GanPQS involved in the uptake of galactooligosaccharides. Responsible for the translocation of the substrate across the membrane. In Bacillus subtilis (strain 168), this protein is Galactooligosaccharides transport system permease protein GanQ (ganQ).